The sequence spans 20 residues: Tetracycline resistance leader peptide (20 aa).

A disordered region spans residues 1–20; sequence MKCNKMNRVQLKEGSVSMTL.

The chain is Tetracycline resistance leader peptide (tetL) from Bacillus subtilis (strain 168).